Consider the following 202-residue polypeptide: Imidazoleglycerol-phosphate dehydratase (202 aa).

This sequence belongs to the imidazoleglycerol-phosphate dehydratase family.

Its subcellular location is the cytoplasm. It catalyses the reaction D-erythro-1-(imidazol-4-yl)glycerol 3-phosphate = 3-(imidazol-4-yl)-2-oxopropyl phosphate + H2O. It participates in amino-acid biosynthesis; L-histidine biosynthesis; L-histidine from 5-phospho-alpha-D-ribose 1-diphosphate: step 6/9. In Synechococcus sp. (strain WH7803), this protein is Imidazoleglycerol-phosphate dehydratase.